The chain runs to 267 residues: Phosphonoacetaldehyde hydrolase (267 aa).

Aspartate 10 serves as the catalytic Nucleophile. Mg(2+)-binding residues include aspartate 10 and alanine 12. The active-site Schiff-base intermediate with substrate is lysine 51. A Mg(2+)-binding site is contributed by aspartate 184.

This sequence belongs to the HAD-like hydrolase superfamily. PhnX family. Homodimer. Mg(2+) serves as cofactor.

It carries out the reaction phosphonoacetaldehyde + H2O = acetaldehyde + phosphate + H(+). Its function is as follows. Involved in phosphonate degradation. The protein is Phosphonoacetaldehyde hydrolase of Paraburkholderia xenovorans (strain LB400).